The chain runs to 252 residues: Chitooligosaccharide deacetylase (252 aa).

Positions 61 and 125 each coordinate Mg(2+).

Belongs to the YdjC deacetylase family. ChbG subfamily. Homodimer. Mg(2+) is required as a cofactor.

Its subcellular location is the cytoplasm. The enzyme catalyses N,N'-diacetylchitobiose + H2O = N-acetyl-beta-D-glucosaminyl-(1-&gt;4)-D-glucosamine + acetate. It catalyses the reaction diacetylchitobiose-6'-phosphate + H2O = N'-monoacetylchitobiose-6'-phosphate + acetate. Its pathway is glycan degradation; chitin degradation. Involved in the degradation of chitin. ChbG is essential for growth on the acetylated chitooligosaccharides chitobiose and chitotriose but is dispensable for growth on cellobiose and chitosan dimer, the deacetylated form of chitobiose. Deacetylation of chitobiose-6-P and chitotriose-6-P is necessary for both the activation of the chb promoter by the regulatory protein ChbR and the hydrolysis of phosphorylated beta-glucosides by the phospho-beta-glucosidase ChbF. Catalyzes the removal of only one acetyl group from chitobiose-6-P to yield monoacetylchitobiose-6-P, the inducer of ChbR and the substrate of ChbF. The protein is Chitooligosaccharide deacetylase of Salmonella typhimurium (strain LT2 / SGSC1412 / ATCC 700720).